The following is a 1494-amino-acid chain: Methyl-CpG-binding domain protein 5 (1494 aa).

In terms of domain architecture, MBD spans 11-81 (DKEGGLPAIQ…KVFNFDPGAA (71 aa)). Positions 57 to 68 (DGTCKCGLECPL) are required for interaction with ASXL1/2/3. Disordered stretches follow at residues 123–152 (LVLTSPGGGTNATPVVPSRAATPRSVRNKS), 200–274 (RQRL…TPLS), 329–350 (HHKPPQGPPPPPPPSCALQKKP), 450–522 (IGRI…KDIP), 594–641 (LAGN…QSGR), 809–848 (PNPPQSRISTSSTPVIPNSIVSSYNQTSSEAGGSGPSSSI), 1154–1173 (HDGRLRNSRGARLPKNLDHG), and 1345–1375 (VNGCVPSPSDAKSISSEDDLRNPDSPSSNEL). Over residues 333–343 (PQGPPPPPPPS) the composition is skewed to pro residues. Low complexity-rich tracts occupy residues 499-511 (SPRPSMPSSPSTK) and 594-612 (LAGNNSSSSSNSGAVAGSG). Composition is skewed to polar residues over residues 614–624 (TEGHSTLNTMF) and 813–835 (QSRISTSSTPVIPNSIVSSYNQT). Residues 836 to 848 (SSEAGGSGPSSSI) show a composition bias toward low complexity. In terms of domain architecture, PWWP spans 1385–1409 (VGDLVWGQIKGLTSWPGKLVREDDV). Residues 1468–1494 (MSGTVHQIPQGDRQMRPPKPKRRKISR) are disordered. Residues 1483–1494 (RPPKPKRRKISR) are compositionally biased toward basic residues.

Core component of the polycomb repressive deubiquitinase (PR-DUB) complex, at least composed of BAP1, one of ASXL1, ASXL2 or (probably) ASXL3, and one of MBD5 or MBD6. Distinct combinations of ASXL and MBD proteins may preferentially bind specific histone modification marks. The PR-DUB core associates with a number of accessory proteins, including FOXK1, FOXK2, KDM1B, HCFC1 and OGT; KDM1B specifically associates with ASXL2 PR-DUB complexes. Interacts (via MBD domain) with ASXL1, ASXL2 and ASXL3 (via PHD domain); the interaction is probably direct, mediates association with other PR-DUB complex core components. As to expression, detected in heart, placenta, liver, skeletal muscle, kidney and pancreas.

Its subcellular location is the nucleus. The protein resides in the chromosome. Functionally, non-catalytic component of the polycomb repressive deubiquitinase (PR-DUB) complex, a complex that specifically mediates deubiquitination of histone H2A monoubiquitinated at 'Lys-120' (H2AK119ub1). Important for stability of PR-DUB components and stimulating its ubiquitinase activity. As part of the PR-DUB complex, associates with chromatin enriched in histone marks H3K4me1, H3K4me3, and H3K27Ac, but not in H3K27me3. The PR-DUB complex is an epigenetic regulator of gene expression, including genes involved in cell growth and survivability. MBD5 and MBD6 containing complexes associate with distinct chromatin regions enriched in genes involved in different pathways. Heterochromatin recruitment is not mediated by DNA methylation. The PR-DUB complex is an epigenetic regulator of gene expression, including genes involved in development, cell communication, signaling, cell proliferation and cell viability. The chain is Methyl-CpG-binding domain protein 5 (MBD5) from Homo sapiens (Human).